We begin with the raw amino-acid sequence, 105 residues long: Met repressor (105 aa).

Belongs to the MetJ family. As to quaternary structure, homodimer.

The protein localises to the cytoplasm. In terms of biological role, this regulatory protein, when combined with SAM (S-adenosylmethionine) represses the expression of the methionine regulon and of enzymes involved in SAM synthesis. The protein is Met repressor of Proteus mirabilis (strain HI4320).